Reading from the N-terminus, the 318-residue chain is Acetyl-coenzyme A carboxylase carboxyl transferase subunit alpha (318 aa).

The 262-residue stretch at 32–293 folds into the CoA carboxyltransferase C-terminal domain; sequence NLSDELERLR…KERLVSQLDR (262 aa).

This sequence belongs to the AccA family. In terms of assembly, acetyl-CoA carboxylase is a heterohexamer composed of biotin carboxyl carrier protein (AccB), biotin carboxylase (AccC) and two subunits each of ACCase subunit alpha (AccA) and ACCase subunit beta (AccD).

Its subcellular location is the cytoplasm. It catalyses the reaction N(6)-carboxybiotinyl-L-lysyl-[protein] + acetyl-CoA = N(6)-biotinyl-L-lysyl-[protein] + malonyl-CoA. It functions in the pathway lipid metabolism; malonyl-CoA biosynthesis; malonyl-CoA from acetyl-CoA: step 1/1. Functionally, component of the acetyl coenzyme A carboxylase (ACC) complex. First, biotin carboxylase catalyzes the carboxylation of biotin on its carrier protein (BCCP) and then the CO(2) group is transferred by the carboxyltransferase to acetyl-CoA to form malonyl-CoA. The protein is Acetyl-coenzyme A carboxylase carboxyl transferase subunit alpha of Saccharophagus degradans (strain 2-40 / ATCC 43961 / DSM 17024).